The following is a 366-amino-acid chain: tRNA-specific 2-thiouridylase MnmA (366 aa).

ATP contacts are provided by residues 6 to 13 (AMSGGVDS) and leucine 32. Residue cysteine 101 is the Nucleophile of the active site. A disulfide bond links cysteine 101 and cysteine 199. An ATP-binding site is contributed by glycine 125. An interaction with tRNA region spans residues 148–150 (KDQ). Residue cysteine 199 is the Cysteine persulfide intermediate of the active site.

The protein belongs to the MnmA/TRMU family.

The protein localises to the cytoplasm. The catalysed reaction is S-sulfanyl-L-cysteinyl-[protein] + uridine(34) in tRNA + AH2 + ATP = 2-thiouridine(34) in tRNA + L-cysteinyl-[protein] + A + AMP + diphosphate + H(+). Functionally, catalyzes the 2-thiolation of uridine at the wobble position (U34) of tRNA, leading to the formation of s(2)U34. The sequence is that of tRNA-specific 2-thiouridylase MnmA from Leifsonia xyli subsp. xyli (strain CTCB07).